Reading from the N-terminus, the 269-residue chain is Formamidopyrimidine-DNA glycosylase (269 aa).

Pro-2 acts as the Schiff-base intermediate with DNA in catalysis. Glu-3 acts as the Proton donor in catalysis. Residue Lys-58 is the Proton donor; for beta-elimination activity of the active site. 3 residues coordinate DNA: His-91, Arg-110, and Lys-150. An FPG-type zinc finger spans residues 235-269 (SVYGCKNKKCYRCKGIIIKFVQNQRSTFYCKKCQT). Arg-259 serves as the catalytic Proton donor; for delta-elimination activity.

This sequence belongs to the FPG family. Monomer. Zn(2+) serves as cofactor.

It catalyses the reaction Hydrolysis of DNA containing ring-opened 7-methylguanine residues, releasing 2,6-diamino-4-hydroxy-5-(N-methyl)formamidopyrimidine.. The catalysed reaction is 2'-deoxyribonucleotide-(2'-deoxyribose 5'-phosphate)-2'-deoxyribonucleotide-DNA = a 3'-end 2'-deoxyribonucleotide-(2,3-dehydro-2,3-deoxyribose 5'-phosphate)-DNA + a 5'-end 5'-phospho-2'-deoxyribonucleoside-DNA + H(+). Its function is as follows. Involved in base excision repair of DNA damaged by oxidation or by mutagenic agents. Acts as a DNA glycosylase that recognizes and removes damaged bases. Has a preference for oxidized purines, such as 7,8-dihydro-8-oxoguanine (8-oxoG). Has AP (apurinic/apyrimidinic) lyase activity and introduces nicks in the DNA strand. Cleaves the DNA backbone by beta-delta elimination to generate a single-strand break at the site of the removed base with both 3'- and 5'-phosphates. The polypeptide is Formamidopyrimidine-DNA glycosylase (Vesicomyosocius okutanii subsp. Calyptogena okutanii (strain HA)).